The sequence spans 304 residues: Glutaminase (304 aa).

Positions 63, 114, 158, 165, 189, 240, and 258 each coordinate substrate.

It belongs to the glutaminase family. In terms of assembly, homotetramer.

The enzyme catalyses L-glutamine + H2O = L-glutamate + NH4(+). In Shewanella amazonensis (strain ATCC BAA-1098 / SB2B), this protein is Glutaminase.